Here is a 382-residue protein sequence, read N- to C-terminus: MQTLDDFAARRLSALEKRQLSRVLHETGRDSSPWVMRGERRMLSLSCNDYLNLSTHPATIRAAIDATAQFGVGAGGSRLVTGNHPLYTALEVRLAALKGTEAAIVFGSGFLANIGIIPALIAPNDLILVDELAHACIHAGAALAHARTIRFPHNDMQALAGLLEQERPQHDHVLIVTDGVFSMDGDLAPMSALVELSARYNAWLMTDDAHGIGVLNEGHGSAYGHDVPLQMGTLSKAVGAYGGYLCASAPVVALIRNRARSFIYTTGLPPGTLAAAITALDLIAADPALTMQPLEKAKLFTRLTSLPDAQSPIVPILLGSAEAALSASAMLAEHDYLAAAIRPPTVPAGTARLRLTFTALTPDSDIMRLAELIRPLLSDTAG.

Arg-22 and Arg-29 together coordinate substrate. 109–110 (GF) provides a ligand contact to pyridoxal 5'-phosphate. Residue His-134 participates in substrate binding. Pyridoxal 5'-phosphate contacts are provided by residues Ser-182, 207–210 (DDAH), and 233–236 (TLSK). Lys-236 carries the post-translational modification N6-(pyridoxal phosphate)lysine. Thr-345 contributes to the substrate binding site.

The protein belongs to the class-II pyridoxal-phosphate-dependent aminotransferase family. BioF subfamily. Homodimer. Requires pyridoxal 5'-phosphate as cofactor.

It carries out the reaction 6-carboxyhexanoyl-[ACP] + L-alanine + H(+) = (8S)-8-amino-7-oxononanoate + holo-[ACP] + CO2. The protein operates within cofactor biosynthesis; biotin biosynthesis. Catalyzes the decarboxylative condensation of pimeloyl-[acyl-carrier protein] and L-alanine to produce 8-amino-7-oxononanoate (AON), [acyl-carrier protein], and carbon dioxide. The polypeptide is 8-amino-7-oxononanoate synthase (Granulibacter bethesdensis (strain ATCC BAA-1260 / CGDNIH1)).